The primary structure comprises 214 residues: MDPKISEIRKSYTLSSLEIEDAGSDPVLFFQKWFEEAVQSEVLEVNAMTLATVTQDGKPDARIVLLKGILKESFLFYTNYESRKGTELETNPNVCLVFFWPELERQVRIEGNVTKVSREVSKEYFHSRPRESQIGALASPQSQKIPDRKFLEGRFQKFTNQYQNKEVDLPNHWGGYAVYPCRIEFWQGRSSRLHDRIVFERDTSSSWEKFRIAP.

Substrate contacts are provided by residues 9–12 and K67; that span reads RKSY. FMN is bound by residues 62–67, 77–78, R83, K84, and Q106; these read RIVLLK and YT. Substrate is bound by residues Y124, R128, and S132. Residues 141–142 and W186 contribute to the FMN site; that span reads QS. 192-194 contributes to the substrate binding site; that stretch reads RLH. R196 serves as a coordination point for FMN.

The protein belongs to the pyridoxamine 5'-phosphate oxidase family. As to quaternary structure, homodimer. Requires FMN as cofactor.

It catalyses the reaction pyridoxamine 5'-phosphate + O2 + H2O = pyridoxal 5'-phosphate + H2O2 + NH4(+). It carries out the reaction pyridoxine 5'-phosphate + O2 = pyridoxal 5'-phosphate + H2O2. The protein operates within cofactor metabolism; pyridoxal 5'-phosphate salvage; pyridoxal 5'-phosphate from pyridoxamine 5'-phosphate: step 1/1. Its pathway is cofactor metabolism; pyridoxal 5'-phosphate salvage; pyridoxal 5'-phosphate from pyridoxine 5'-phosphate: step 1/1. In terms of biological role, catalyzes the oxidation of either pyridoxine 5'-phosphate (PNP) or pyridoxamine 5'-phosphate (PMP) into pyridoxal 5'-phosphate (PLP). In Leptospira interrogans serogroup Icterohaemorrhagiae serovar copenhageni (strain Fiocruz L1-130), this protein is Pyridoxine/pyridoxamine 5'-phosphate oxidase.